The chain runs to 150 residues: Large ribosomal subunit protein bL9 (150 aa).

It belongs to the bacterial ribosomal protein bL9 family.

Binds to the 23S rRNA. This Herminiimonas arsenicoxydans protein is Large ribosomal subunit protein bL9.